The primary structure comprises 492 residues: MTLWINGDWITGQGERRRKTNPVSEEILWQGNDADAAQVAEACQAARAAFPRWARQPFAARQAIVEKFSVLLEAHKADLTEVIARETGKPRWEAATEVTAMINKIAISIKAYHARTGEQKSELVDGAATLRHRPHGVLAVFGPYNFPGHLPNGHIVPALLAGNTLIFKPSELTPWTGETVIKLWERAGLPAGVLNLVQGGRETGQALSSLDDLDGLLFTGSASTGYQLHRQLSGQPEKILALEMGGNNPLIIEDATNMDAAVHLTLQSAFITAGQRCTCARRLLVKQGAQGDAFLARLVDVAGRLQPGRWDDDPQPFIGGLISAQAAQHVMEAWRQREALGGRTLLAPRKVKEGTSLLTPGIIELTGVADVPDEEVFGPLLNVWRYAHFDEAIRLANNTRFGLSCGLVSTDRAQFEQLLLEARAGIVNWNKPLTGAASTAPFGGVGASGNHRPSAWYAADYCAWPMASLESPELTLPATLSPGLDFSRREAV.

220–225 (GSASTG) is an NAD(+) binding site. Catalysis depends on residues glutamate 243 and cysteine 277.

The protein belongs to the aldehyde dehydrogenase family. AstD subfamily.

The enzyme catalyses N-succinyl-L-glutamate 5-semialdehyde + NAD(+) + H2O = N-succinyl-L-glutamate + NADH + 2 H(+). The protein operates within amino-acid degradation; L-arginine degradation via AST pathway; L-glutamate and succinate from L-arginine: step 4/5. In terms of biological role, catalyzes the NAD-dependent reduction of succinylglutamate semialdehyde into succinylglutamate. In Salmonella typhi, this protein is N-succinylglutamate 5-semialdehyde dehydrogenase.